Reading from the N-terminus, the 163-residue chain is CDP-archaeol synthase (163 aa).

Transmembrane regions (helical) follow at residues 4–24 (LLLGLIYYIPALVANGSAPFI), 52–72 (LLLSLTFGTTVGAIISRFLGI), 75–95 (IIIGFVESLGAMLGDMLGAFI), 107–127 (APILDQLDFILGATVVLISFN), and 128–148 (VNLNIYQVVFVCVLVIALHMF).

This sequence belongs to the CDP-archaeol synthase family. Mg(2+) is required as a cofactor.

It localises to the cell membrane. The enzyme catalyses 2,3-bis-O-(geranylgeranyl)-sn-glycerol 1-phosphate + CTP + H(+) = CDP-2,3-bis-O-(geranylgeranyl)-sn-glycerol + diphosphate. The protein operates within membrane lipid metabolism; glycerophospholipid metabolism. Catalyzes the formation of CDP-2,3-bis-(O-geranylgeranyl)-sn-glycerol (CDP-archaeol) from 2,3-bis-(O-geranylgeranyl)-sn-glycerol 1-phosphate (DGGGP) and CTP. This reaction is the third ether-bond-formation step in the biosynthesis of archaeal membrane lipids. In Sulfolobus acidocaldarius (strain ATCC 33909 / DSM 639 / JCM 8929 / NBRC 15157 / NCIMB 11770), this protein is CDP-archaeol synthase.